We begin with the raw amino-acid sequence, 327 residues long: Putative HTH-type transcriptional regulatory protein MmarC6_0210 (327 aa).

An HTH cro/C1-type domain is found at 128–183 (LRETREKLKISVGELAEISRVSRKTIYKYEQNEANPSAEVAIKIEEYLDVPLIKGI). Positions 139 to 158 (VGELAEISRVSRKTIYKYEQ) form a DNA-binding region, H-T-H motif.

This chain is Putative HTH-type transcriptional regulatory protein MmarC6_0210, found in Methanococcus maripaludis (strain C6 / ATCC BAA-1332).